Reading from the N-terminus, the 288-residue chain is Acetyl-coenzyme A carboxylase carboxyl transferase subunit beta (288 aa).

The CoA carboxyltransferase N-terminal domain maps to 32–288; that stretch reads LFAKCPACKH…LELHTEVENV (257 aa). Zn(2+)-binding residues include C36, C39, C54, and C57. The C4-type zinc-finger motif lies at 36 to 57; the sequence is CPACKHTIYQKDLGKNKVCPNC.

Belongs to the AccD/PCCB family. As to quaternary structure, acetyl-CoA carboxylase is a heterohexamer composed of biotin carboxyl carrier protein (AccB), biotin carboxylase (AccC) and two subunits each of ACCase subunit alpha (AccA) and ACCase subunit beta (AccD). Zn(2+) is required as a cofactor.

The protein localises to the cytoplasm. The catalysed reaction is N(6)-carboxybiotinyl-L-lysyl-[protein] + acetyl-CoA = N(6)-biotinyl-L-lysyl-[protein] + malonyl-CoA. Its pathway is lipid metabolism; malonyl-CoA biosynthesis; malonyl-CoA from acetyl-CoA: step 1/1. Its function is as follows. Component of the acetyl coenzyme A carboxylase (ACC) complex. Biotin carboxylase (BC) catalyzes the carboxylation of biotin on its carrier protein (BCCP) and then the CO(2) group is transferred by the transcarboxylase to acetyl-CoA to form malonyl-CoA. In Lactococcus lactis subsp. lactis (strain IL1403) (Streptococcus lactis), this protein is Acetyl-coenzyme A carboxylase carboxyl transferase subunit beta.